The sequence spans 396 residues: Probable sugar efflux transporter (396 aa).

The next 12 helical transmembrane spans lie at 15-35 (VVTL…PVGL), 50-70 (VGIM…PFML), 81-101 (LICL…SWSF), 103-123 (VLVI…SITA), 136-156 (AQAL…GLPL), 170-190 (FFAI…LLPL), 209-229 (PALM…YTAY), 246-266 (FATA…VIFG), 275-295 (ALVS…LPAA), 299-319 (IHLG…GLGM), 333-353 (VAMA…ALVG), and 364-384 (MIGY…IIIF).

Belongs to the major facilitator superfamily. SotB (TC 2.A.1.2) family.

The protein resides in the cell inner membrane. Its function is as follows. Involved in the efflux of sugars. The physiological role may be the reduction of the intracellular concentration of toxic sugars or sugar metabolites. The sequence is that of Probable sugar efflux transporter from Escherichia coli O6:K15:H31 (strain 536 / UPEC).